The chain runs to 165 residues: Cytochrome c-type biogenesis protein CcmE (165 aa).

Residues 1 to 7 are Cytoplasmic-facing; the sequence is MTRKQKR. A helical; Signal-anchor for type II membrane protein transmembrane segment spans residues 8 to 28; that stretch reads LAVIAGGMGFIIAAVLLVMFA. Topologically, residues 29 to 165 are periplasmic; it reads FSQSVAYFYM…GQGQEAKATR (137 aa). Residues histidine 124 and tyrosine 128 each coordinate heme. Positions 144–154 are enriched in low complexity; the sequence is QDGQGAQSQAG. The segment at 144-165 is disordered; that stretch reads QDGQGAQSQAGQGQGQEAKATR.

This sequence belongs to the CcmE/CycJ family.

It localises to the cell inner membrane. In terms of biological role, heme chaperone required for the biogenesis of c-type cytochromes. Transiently binds heme delivered by CcmC and transfers the heme to apo-cytochromes in a process facilitated by CcmF and CcmH. This Rhizobium etli (strain CIAT 652) protein is Cytochrome c-type biogenesis protein CcmE.